The sequence spans 184 residues: Protein DMP2 (184 aa).

4 helical membrane-spanning segments follow: residues 19-39, 45-65, 105-125, and 142-162; these read LIKL…PVLT, LLIN…SCCF, VGDF…SLLD, and IFLM…FTVF.

This sequence belongs to the plant DMP1 protein family. Expressed constitutively in leaves, stems, flowers, siliques and roots.

The protein localises to the endoplasmic reticulum membrane. Its subcellular location is the vacuole membrane. Involved in membrane remodeling. The polypeptide is Protein DMP2 (Arabidopsis thaliana (Mouse-ear cress)).